Reading from the N-terminus, the 293-residue chain is tRNA pseudouridine synthase B (293 aa).

The Nucleophile role is filled by aspartate 39.

Belongs to the pseudouridine synthase TruB family. Type 1 subfamily.

The catalysed reaction is uridine(55) in tRNA = pseudouridine(55) in tRNA. Its function is as follows. Responsible for synthesis of pseudouridine from uracil-55 in the psi GC loop of transfer RNAs. This Rickettsia bellii (strain OSU 85-389) protein is tRNA pseudouridine synthase B.